Here is a 454-residue protein sequence, read N- to C-terminus: Capsid vertex component 1 (454 aa).

Residues 197–227 form a disordered region; sequence TVRGESLDPPVSQKGPARTRHRPPPVRLSFN.

This sequence belongs to the herpesviridae CVC1 protein family. As to quaternary structure, interacts (via C-terminus) with capsid vertex component 2/CVC2.

The protein localises to the virion. Its subcellular location is the host nucleus. Its function is as follows. Capsid vertex-specific component that plays a role during viral DNA encapsidation, assuring correct genome cleavage and presumably stabilizing capsids that contain full-length viral genomes. This Human herpesvirus 8 type P (isolate GK18) (HHV-8) protein is Capsid vertex component 1.